The following is a 1082-amino-acid chain: RNA-directed RNA polymerase (1082 aa).

The RdRp catalytic domain maps to 498–670 (LSYGDVTRYL…ALASLTGCEI (173 aa)).

This sequence belongs to the reoviridae RNA-directed RNA polymerase family. As to quaternary structure, interacts with VP3 (Potential). Interacts with VP2; this interaction activates VP1. Interacts with NSP5; this interaction is probably necessary for the formation of functional virus factories. Interacts with NSP2; this interaction is weak. Mg(2+) is required as a cofactor.

It localises to the virion. It catalyses the reaction RNA(n) + a ribonucleoside 5'-triphosphate = RNA(n+1) + diphosphate. Functionally, RNA-directed RNA polymerase that is involved in both transcription and genome replication. Together with VP3 capping enzyme, forms an enzyme complex positioned near the channels situated at each of the five-fold vertices of the core. Following infection, the outermost layer of the virus is lost, leaving a double-layered particle (DLP) made up of the core and VP6 shell. VP1 then catalyzes the transcription of fully conservative plus-strand genomic RNAs that are extruded through the DLP's channels into the cytoplasm where they function as mRNAs for translation of viral proteins. One copy of each of the viral (+)RNAs is also recruited during core assembly, together with newly synthesized polymerase complexes and VP2. The polymerase of these novo-formed particles catalyzes the synthesis of complementary minus-strands leading to dsDNA formation. To do so, the polymerase specifically recognizes conserved 3' sequence(s) in plus-strand RNA templates. Once dsRNA synthesis is complete, the polymerase switches to the transcriptional mode, thus providing secondary transcription. The protein is RNA-directed RNA polymerase of Rotavirus C (strain RVC/Pig/United States/Cowden/1980) (RV-C).